Reading from the N-terminus, the 148-residue chain is Putative pre-16S rRNA nuclease (148 aa).

The protein belongs to the YqgF nuclease family.

The protein resides in the cytoplasm. Could be a nuclease involved in processing of the 5'-end of pre-16S rRNA. This is Putative pre-16S rRNA nuclease from Chlamydia muridarum (strain MoPn / Nigg).